Reading from the N-terminus, the 807-residue chain is Spondin-1 (807 aa).

An N-terminal signal peptide occupies residues methionine 1–alanine 28. The 166-residue stretch at phenylalanine 29–lysine 194 folds into the Reelin domain. 17 disulfide bridges follow: cysteine 44–cysteine 128, cysteine 156–cysteine 182, cysteine 199–cysteine 336, cysteine 200–cysteine 340, cysteine 202–cysteine 415, cysteine 443–cysteine 480, cysteine 454–cysteine 489, cysteine 459–cysteine 494, cysteine 502–cysteine 538, cysteine 513–cysteine 517, cysteine 548–cysteine 554, cysteine 559–cysteine 595, cysteine 570–cysteine 574, cysteine 605–cysteine 610, cysteine 615–cysteine 650, cysteine 626–cysteine 630, and cysteine 660–cysteine 665. A Spondin domain is found at proline 195–proline 388. Asparagine 214 carries N-linked (GlcNAc...) asparagine glycosylation. The Ca(2+) site is built by aspartate 325, aspartate 354, and aspartate 358. 6 consecutive TSP type-1 domains span residues threonine 442 to serine 495, threonine 501 to serine 555, serine 558 to histidine 611, proline 614 to proline 666, aspartate 668 to leucine 721, and glycine 754 to proline 806. A glycan (N-linked (GlcNAc...) asparagine) is linked at asparagine 681.

As to quaternary structure, binds to the central extracellular domain of APP and inhibits beta-secretase cleavage of APP.

It localises to the secreted. The protein localises to the extracellular space. It is found in the extracellular matrix. Its function is as follows. Cell adhesion protein that promotes the attachment of spinal cord and sensory neuron cells and the outgrowth of neurites in vitro. May contribute to the growth and guidance of axons in both the spinal cord and the PNS. Major factor for vascular smooth muscle cell. The protein is Spondin-1 (SPON1) of Bos taurus (Bovine).